The sequence spans 969 residues: RNA polymerase-associated protein RapA (969 aa).

Residues 164–334 form the Helicase ATP-binding domain; it reads EVGRRHAPRV…FARLRLLDPD (171 aa). 177–184 is a binding site for ATP; that stretch reads DEVGLGKT. Residues 280-283 carry the DEAH box motif; it reads DEAH. The Helicase C-terminal domain occupies 492–646; the sequence is RVNWLLEKVK…TCPTGRAVYD (155 aa).

The protein belongs to the SNF2/RAD54 helicase family. RapA subfamily. In terms of assembly, interacts with the RNAP. Has a higher affinity for the core RNAP than for the holoenzyme. Its ATPase activity is stimulated by binding to RNAP.

Transcription regulator that activates transcription by stimulating RNA polymerase (RNAP) recycling in case of stress conditions such as supercoiled DNA or high salt concentrations. Probably acts by releasing the RNAP, when it is trapped or immobilized on tightly supercoiled DNA. Does not activate transcription on linear DNA. Probably not involved in DNA repair. The chain is RNA polymerase-associated protein RapA from Vibrio campbellii (strain ATCC BAA-1116).